A 288-amino-acid polypeptide reads, in one-letter code: UTP--glucose-1-phosphate uridylyltransferase (288 aa).

Belongs to the UDPGP type 2 family.

The enzyme catalyses alpha-D-glucose 1-phosphate + UTP + H(+) = UDP-alpha-D-glucose + diphosphate. It functions in the pathway glycolipid metabolism; diglucosyl-diacylglycerol biosynthesis. In terms of biological role, catalyzes the formation of UDP-glucose from glucose-1-phosphate and UTP. This is an intermediate step in the biosynthesis of diglucosyl-diacylglycerol (Glc2-DAG), i.e. the predominant glycolipid found in the S.aureus membrane, which is also used as a membrane anchor for lipoteichoic acid (LTA). The chain is UTP--glucose-1-phosphate uridylyltransferase (gtaB) from Staphylococcus aureus (strain bovine RF122 / ET3-1).